A 253-amino-acid chain; its full sequence is Proproteinase E (253 aa).

The propeptide at 1–11 (FSQPFSRPSSR) is activation peptide. Residues 12-251 (VVNGEDAVPY…FIDWIDETIA (240 aa)) form the Peptidase S1 domain. 5 disulfides stabilise this stretch: Cys41–Cys57, Cys100–Cys103, Cys140–Cys206, Cys171–Cys187, and Cys196–Cys227.

Belongs to the peptidase S1 family. In terms of assembly, monomer. The zymogen is secreted as a ternary complex composed of procarboxypeptidase A, chymotrypsinogen C and proproteinase E. Pancreas.

It localises to the secreted. The protein resides in the extracellular space. Its function is as follows. May protect procarboxypeptidase A against denaturation in the acidic environment of the ruminant duodenum. The chain is Proproteinase E from Bos taurus (Bovine).